Here is a 157-residue protein sequence, read N- to C-terminus: Succinate dehydrogenase assembly factor 2-B, mitochondrial (157 aa).

The N-terminal 22 residues, methionine 1–arginine 22, are a transit peptide targeting the mitochondrion.

It belongs to the SDHAF2 family. Interacts with the flavoprotein subunit within the SDH catalytic dimer.

The protein localises to the mitochondrion matrix. Its function is as follows. Plays an essential role in the assembly of succinate dehydrogenase (SDH), an enzyme complex (also referred to as respiratory complex II) that is a component of both the tricarboxylic acid (TCA) cycle and the mitochondrial electron transport chain, and which couples the oxidation of succinate to fumarate with the reduction of ubiquinone (coenzyme Q) to ubiquinol. Required for flavinylation (covalent attachment of FAD) of the flavoprotein subunit of the SDH catalytic dimer. This is Succinate dehydrogenase assembly factor 2-B, mitochondrial from Drosophila mojavensis (Fruit fly).